The chain runs to 352 residues: Protein-glutamate methylesterase/protein-glutamine glutaminase 2 (352 aa).

The Response regulatory domain occupies 1–116 (MVVDDSAVVR…KQFLTDSADE (116 aa)). Aspartate 50 is subject to 4-aspartylphosphate. A CheB-type methylesterase domain is found at 162–352 (AQTTERIVAI…MAREIVTQLQ (191 aa)). Active-site residues include serine 174, histidine 200, and aspartate 296.

This sequence belongs to the CheB family. Phosphorylated by CheA. Phosphorylation of the N-terminal regulatory domain activates the methylesterase activity.

It localises to the cytoplasm. It catalyses the reaction [protein]-L-glutamate 5-O-methyl ester + H2O = L-glutamyl-[protein] + methanol + H(+). It carries out the reaction L-glutaminyl-[protein] + H2O = L-glutamyl-[protein] + NH4(+). Its function is as follows. Involved in chemotaxis. Part of a chemotaxis signal transduction system that modulates chemotaxis in response to various stimuli. Catalyzes the demethylation of specific methylglutamate residues introduced into the chemoreceptors (methyl-accepting chemotaxis proteins or MCP) by CheR. Also mediates the irreversible deamidation of specific glutamine residues to glutamic acid. The protein is Protein-glutamate methylesterase/protein-glutamine glutaminase 2 of Xanthomonas axonopodis pv. citri (strain 306).